A 137-amino-acid polypeptide reads, in one-letter code: Mediator of RNA polymerase II transcription subunit 21 (137 aa).

The interval 37 to 56 (PKDTIAPSKADQPPEVDTLP) is disordered. Positions 87–130 (GLDNSEQDQLQSIKELEEELNVAEKQRQEAVKEKDEVLVKLDQT) form a coiled coil.

It belongs to the Mediator complex subunit 21 family. In terms of assembly, component of the Mediator complex.

The protein resides in the nucleus. Component of the Mediator complex, a coactivator involved in the regulated transcription of nearly all RNA polymerase II-dependent genes. Mediator functions as a bridge to convey information from gene-specific regulatory proteins to the basal RNA polymerase II transcription machinery. Mediator is recruited to promoters by direct interactions with regulatory proteins and serves as a scaffold for the assembly of a functional preinitiation complex with RNA polymerase II and the general transcription factors. This is Mediator of RNA polymerase II transcription subunit 21 (srb-7) from Neurospora crassa (strain ATCC 24698 / 74-OR23-1A / CBS 708.71 / DSM 1257 / FGSC 987).